We begin with the raw amino-acid sequence, 450 residues long: Phosphoglucosamine mutase (450 aa).

Ser101 functions as the Phosphoserine intermediate in the catalytic mechanism. Positions 101, 240, 242, and 244 each coordinate Mg(2+). A Phosphoserine modification is found at Ser101.

Belongs to the phosphohexose mutase family. It depends on Mg(2+) as a cofactor. Activated by phosphorylation. Phosphorylated by StkP in vivo.

It carries out the reaction alpha-D-glucosamine 1-phosphate = D-glucosamine 6-phosphate. Catalyzes the conversion of glucosamine-6-phosphate to glucosamine-1-phosphate. This chain is Phosphoglucosamine mutase, found in Streptococcus pneumoniae (strain ATCC BAA-255 / R6).